The following is a 311-amino-acid chain: Porphobilinogen deaminase (311 aa).

An S-(dipyrrolylmethanemethyl)cysteine modification is found at C242.

Belongs to the HMBS family. In terms of assembly, monomer. Dipyrromethane is required as a cofactor.

It carries out the reaction 4 porphobilinogen + H2O = hydroxymethylbilane + 4 NH4(+). It participates in porphyrin-containing compound metabolism; protoporphyrin-IX biosynthesis; coproporphyrinogen-III from 5-aminolevulinate: step 2/4. Functionally, tetrapolymerization of the monopyrrole PBG into the hydroxymethylbilane pre-uroporphyrinogen in several discrete steps. This is Porphobilinogen deaminase (hemC) from Neisseria meningitidis serogroup A / serotype 4A (strain DSM 15465 / Z2491).